The sequence spans 486 residues: UDP-N-acetylmuramate--L-alanine ligase (486 aa).

126 to 132 contributes to the ATP binding site; it reads GTHGKTT.

This sequence belongs to the MurCDEF family.

The protein resides in the cytoplasm. It carries out the reaction UDP-N-acetyl-alpha-D-muramate + L-alanine + ATP = UDP-N-acetyl-alpha-D-muramoyl-L-alanine + ADP + phosphate + H(+). It participates in cell wall biogenesis; peptidoglycan biosynthesis. Functionally, cell wall formation. The sequence is that of UDP-N-acetylmuramate--L-alanine ligase from Pectobacterium carotovorum subsp. carotovorum (strain PC1).